A 406-amino-acid chain; its full sequence is MKAVIFVIDGLGDRPDEFGNTPLKEANTHTMDKIAKEGICGIMNAIDIGVRPGSDTAHLALLGYDPYETYTGRGPFEACGVGITVKPGDIAFRCNFSSVDKEFIVTDRRAGRIEDTSLLEKELDGLKIDDVEVIFKESGGYRAALLLRGPNLSDKISDADPKKEGKKVKEIIPLDDSKEAEKTANILNRLLKVAYEKLDGHPVNQKRRTNNLPVANMIIPRGVGKVPEIIPFDKKYGLKGACIAGTGLIKGIAKMVNLDVIEVKGATGTPDSNFMAKAKALVETLKTHDFVLINVKGADEAGHDGNYEVKKQVIEKIDEMLTYIMENIDRKDVYFVLTGDHSTPIEEMDHSADPLPIVIWGKSVRVDDVEKFDEFSTCKGGLNWIKGKNIMPILIDLMGLSKKYGA.

The protein belongs to the BPG-independent phosphoglycerate mutase family. A-PGAM subfamily.

The enzyme catalyses (2R)-2-phosphoglycerate = (2R)-3-phosphoglycerate. It participates in carbohydrate degradation; glycolysis; pyruvate from D-glyceraldehyde 3-phosphate: step 3/5. In terms of biological role, catalyzes the interconversion of 2-phosphoglycerate and 3-phosphoglycerate. The polypeptide is 2,3-bisphosphoglycerate-independent phosphoglycerate mutase (Methanococcus vannielii (strain ATCC 35089 / DSM 1224 / JCM 13029 / OCM 148 / SB)).